A 230-amino-acid chain; its full sequence is UPF0173 metal-dependent hydrolase Acid_3917 (230 aa).

The protein belongs to the UPF0173 family.

This is UPF0173 metal-dependent hydrolase Acid_3917 from Solibacter usitatus (strain Ellin6076).